Consider the following 1146-residue polypeptide: Probable phospholipid-transporting ATPase IIB (1146 aa).

At 1 to 143 (MADQIPLYPV…IKNQKYNVFT (143 aa)) the chain is on the cytoplasmic side. The helical transmembrane segment at 144–164 (FIPGVLYEQFKFFLNLYFLVV) threads the bilayer. Topologically, residues 165–172 (SCSQFVPA) are extracellular. The chain crosses the membrane as a helical span at residues 173–193 (LKIGYLYTYWAPLGFVLAVTI). The Cytoplasmic segment spans residues 194 to 381 (AREAIDEFRR…LDLELNQLTK (188 aa)). Residues 382 to 402 (ALFLALVVLSVVMVTLQGFAG) form a helical membrane-spanning segment. Residues 403-407 (PWYRN) are Extracellular-facing. A helical transmembrane segment spans residues 408-427 (LFRFLLLFSYIIPISLRVNL). At 428–938 (DMGKAAYGWM…ALGQFVMHRG (511 aa)) the chain is on the cytoplasmic side. Asp467 acts as the 4-aspartylphosphate intermediate in catalysis. ATP contacts are provided by Asp467, Lys468, and Thr469. Residue Asp467 coordinates Mg(2+). Position 469 (Thr469) interacts with Mg(2+). Over residues 508 to 519 (VHSQPSGHNPSS) the composition is skewed to polar residues. The disordered stretch occupies residues 508 to 535 (VHSQPSGHNPSSAPLRRSQSSTPKVKKS). Positions 590, 632, 637, 656, 685, 686, 765, 766, 767, 847, and 853 each coordinate ATP. Asp873 contributes to the Mg(2+) binding site. Asn876 and Asp877 together coordinate ATP. Residue Asp877 participates in Mg(2+) binding. A helical transmembrane segment spans residues 939 to 959 (LIISTMQAVFSSVFYFASVPL). The Extracellular portion of the chain corresponds to 960-961 (YQ). The chain crosses the membrane as a helical span at residues 962 to 982 (GFLMVGYATIYTMFPVFSLVL). The Cytoplasmic segment spans residues 983 to 1011 (DQDVKPEMAILYPELYKDLTKGRSLSFKT). A helical transmembrane segment spans residues 1012-1032 (FLIWVLISIYQGGILMYGALL). Over 1033–1040 (LFEDEFVH) the chain is Extracellular. A helical transmembrane segment spans residues 1041 to 1061 (VVAISFTALILTELLMVALTI). Over 1062–1065 (RTWH) the chain is Cytoplasmic. The helical transmembrane segment at 1066–1086 (WLMVVAEFLSLGCYVASLAFL) threads the bilayer. Topologically, residues 1087-1105 (NEYFGIGRVSFGAFLDVAF) are extracellular. A helical transmembrane segment spans residues 1106-1128 (ITTVTFLWKVSAITVVSCLPLYV). Residues 1129-1146 (LKYLKRKLSPPSYSKLSS) lie on the Cytoplasmic side of the membrane.

This sequence belongs to the cation transport ATPase (P-type) (TC 3.A.3) family. Type IV subfamily. Mg(2+) serves as cofactor. As to expression, found in most tissues except spleen and muscle. Most abundant in testis. Also detected in fetal tissues.

It localises to the golgi apparatus. The protein resides in the trans-Golgi network membrane. The catalysed reaction is ATP + H2O + phospholipidSide 1 = ADP + phosphate + phospholipidSide 2.. The protein is Probable phospholipid-transporting ATPase IIB (Atp9b) of Mus musculus (Mouse).